The primary structure comprises 645 residues: Glucans biosynthesis glucosyltransferase H (645 aa).

The span at 1 to 13 shows a compositional bias: polar residues; the sequence is MDGTVTPSPTTTA. The segment at 1 to 32 is disordered; the sequence is MDGTVTPSPTTTAMPPVSALDAGTPTLPPEAP. The next 7 helical transmembrane spans lie at 64 to 84, 98 to 118, 423 to 443, 465 to 485, 504 to 524, 559 to 579, and 580 to 600; these read LIGG…SVLW, LFVL…AGFV, APMW…GGGI, AIWI…LGYI, AVSI…VMYL, YGGL…VSPA, and LAAW…VVAL.

This sequence belongs to the glycosyltransferase 2 family. OpgH subfamily.

The protein resides in the cell inner membrane. Its pathway is glycan metabolism; osmoregulated periplasmic glucan (OPG) biosynthesis. Functionally, involved in the biosynthesis of osmoregulated periplasmic glucans (OPGs). The sequence is that of Glucans biosynthesis glucosyltransferase H from Xanthomonas euvesicatoria pv. vesicatoria (strain 85-10) (Xanthomonas campestris pv. vesicatoria).